We begin with the raw amino-acid sequence, 276 residues long: Bifunctional protein FolD (276 aa).

NADP(+) contacts are provided by residues 158–160 (NRS), Ser-183, and Ile-224.

The protein belongs to the tetrahydrofolate dehydrogenase/cyclohydrolase family. In terms of assembly, homodimer.

It catalyses the reaction (6R)-5,10-methylene-5,6,7,8-tetrahydrofolate + NADP(+) = (6R)-5,10-methenyltetrahydrofolate + NADPH. The catalysed reaction is (6R)-5,10-methenyltetrahydrofolate + H2O = (6R)-10-formyltetrahydrofolate + H(+). It functions in the pathway one-carbon metabolism; tetrahydrofolate interconversion. Its function is as follows. Catalyzes the oxidation of 5,10-methylenetetrahydrofolate to 5,10-methenyltetrahydrofolate and then the hydrolysis of 5,10-methenyltetrahydrofolate to 10-formyltetrahydrofolate. The sequence is that of Bifunctional protein FolD from Picrophilus torridus (strain ATCC 700027 / DSM 9790 / JCM 10055 / NBRC 100828 / KAW 2/3).